The primary structure comprises 750 residues: uncharacterized protein (750 aa).

Asn-61, Asn-84, Asn-115, Asn-154, Asn-176, Asn-197, Asn-207, Asn-228, Asn-241, Asn-267, Asn-293, Asn-299, Asn-312, Asn-335, Asn-351, Asn-373, Asn-389, and Asn-519 each carry an N-linked (GlcNAc...) asparagine glycan. Ser-675 and Ser-678 each carry phosphoserine. Residue Lys-697 forms a Glycyl lysine isopeptide (Lys-Gly) (interchain with G-Cter in ubiquitin) linkage. Composition is skewed to polar residues over residues 703-726 (EITAIDNSSSANNTDVTGSTSNRT) and 736-750 (KDSNGPVNNNAHLVA). Residues 703–750 (EITAIDNSSSANNTDVTGSTSNRTELSHPDVTPKDSNGPVNNNAHLVA) are disordered. Asn-709, Asn-714, and Asn-724 each carry an N-linked (GlcNAc...) asparagine glycan.

In terms of processing, N-glycosylated.

The protein localises to the mitochondrion. This is an uncharacterized protein from Saccharomyces cerevisiae (strain ATCC 204508 / S288c) (Baker's yeast).